The primary structure comprises 378 residues: Quinolinate synthase (378 aa).

Iminosuccinate contacts are provided by His-59 and Ser-80. Residue Cys-125 participates in [4Fe-4S] cluster binding. Residues 151 to 153 (YAN) and Ser-168 contribute to the iminosuccinate site. Cys-212 contacts [4Fe-4S] cluster. Iminosuccinate contacts are provided by residues 238–240 (HPE) and Thr-255. A [4Fe-4S] cluster-binding site is contributed by Cys-309.

The protein belongs to the quinolinate synthase family. Type 1 subfamily. It depends on [4Fe-4S] cluster as a cofactor.

The protein resides in the cytoplasm. The enzyme catalyses iminosuccinate + dihydroxyacetone phosphate = quinolinate + phosphate + 2 H2O + H(+). The protein operates within cofactor biosynthesis; NAD(+) biosynthesis; quinolinate from iminoaspartate: step 1/1. In terms of biological role, catalyzes the condensation of iminoaspartate with dihydroxyacetone phosphate to form quinolinate. In Burkholderia thailandensis (strain ATCC 700388 / DSM 13276 / CCUG 48851 / CIP 106301 / E264), this protein is Quinolinate synthase.